The chain runs to 521 residues: Caspase-10 (521 aa).

Residues 1–219 (MKSQGQHWYS…GEEELVSQTD (219 aa)) constitute a propeptide that is removed on maturation. 2 consecutive DED domains span residues 19 to 97 (SFRE…HLNC) and 114 to 187 (LFRN…NIEK). Polar residues-rich tracts occupy residues 231 to 248 (SWQN…TNGA) and 259 to 268 (ASANTLNSET). The tract at residues 231-269 (SWQNKHAGSNGNRATNGAPSLVSRGMQGASANTLNSETS) is disordered. Catalysis depends on residues His-358 and Cys-401.

It belongs to the peptidase C14A family. As to quaternary structure, heterotetramer that consists of two anti-parallel arranged heterodimers, each one formed by a 23/17 kDa (p23/17) (depending on the splicing events) and a 12 kDa (p12) subunit. Self-associates. Interacts with FADD and CASP8. Found in a Fas signaling complex consisting of FAS, FADD, CASP8 and CASP10. Interacts with RFFL and RNF34; negatively regulate CASP10 through proteasomal degradation. Interacts with RIOK3. Cleavage by granzyme B and autocatalytic activity generate the two active subunits. As to expression, detectable in most tissues. Lowest expression is seen in brain, kidney, prostate, testis and colon.

It catalyses the reaction Strict requirement for Asp at position P1 and has a preferred cleavage sequence of Leu-Gln-Thr-Asp-|-Gly.. Functionally, involved in the activation cascade of caspases responsible for apoptosis execution. Recruited to both Fas- and TNFR-1 receptors in a FADD dependent manner. May participate in the granzyme B apoptotic pathways. Cleaves and activates effector caspases CASP3, CASP4, CASP6, CASP7, CASP8 and CASP9. Hydrolyzes the small- molecule substrates, Tyr-Val-Ala-Asp-|-AMC and Asp-Glu-Val-Asp-|-AMC. In terms of biological role, isoform 7 can enhance NF-kappaB activity but promotes only slight apoptosis. Isoform C is proteolytically inactive. The protein is Caspase-10 (CASP10) of Homo sapiens (Human).